The primary structure comprises 845 residues: Protein P (845 aa).

Residues 1–179 (MPLSYQHFRK…FCGSPYSWEQ (179 aa)) form a terminal protein domain (TP) region. The spacer stretch occupies residues 180–348 (ELQHGRLVIK…YCLSHLVNLR (169 aa)). The interval 226–252 (GLQPRQGRLASSQPSRSGSIRAKAHPS) is disordered. The segment covering 234–243 (LASSQPSRSG) has biased composition (polar residues). Positions 349–692 (EDWGPCDEHG…YMNLYPVARQ (344 aa)) are polymerase/reverse transcriptase domain (RT). A Reverse transcriptase domain is found at 359–602 (EHHIRIPRTP…YSLNFMGYII (244 aa)). Asp431, Asp553, and Asp554 together coordinate Mg(2+). A rnaseH domain (RH) region spans residues 693–845 (RPGLCQVFAD…SPLHVAWRPP (153 aa)).

This sequence belongs to the hepadnaviridae P protein family.

The enzyme catalyses DNA(n) + a 2'-deoxyribonucleoside 5'-triphosphate = DNA(n+1) + diphosphate. It catalyses the reaction Endonucleolytic cleavage to 5'-phosphomonoester.. With respect to regulation, activated by host HSP70 and HSP40 in vitro to be able to bind the epsilon loop of the pgRNA. Because deletion of the RNase H region renders the protein partly chaperone-independent, the chaperones may be needed indirectly to relieve occlusion of the RNA-binding site by this domain. Inhibited by several reverse-transcriptase inhibitors: Lamivudine, Adefovir and Entecavir. Its function is as follows. Multifunctional enzyme that converts the viral RNA genome into dsDNA in viral cytoplasmic capsids. This enzyme displays a DNA polymerase activity that can copy either DNA or RNA templates, and a ribonuclease H (RNase H) activity that cleaves the RNA strand of RNA-DNA heteroduplexes in a partially processive 3'- to 5'-endonucleasic mode. Neo-synthesized pregenomic RNA (pgRNA) are encapsidated together with the P protein, and reverse-transcribed inside the nucleocapsid. Initiation of reverse-transcription occurs first by binding the epsilon loop on the pgRNA genome, and is initiated by protein priming, thereby the 5'-end of (-)DNA is covalently linked to P protein. Partial (+)DNA is synthesized from the (-)DNA template and generates the relaxed circular DNA (RC-DNA) genome. After budding and infection, the RC-DNA migrates in the nucleus, and is converted into a plasmid-like covalently closed circular DNA (cccDNA). The activity of P protein does not seem to be necessary for cccDNA generation, and is presumably released from (+)DNA by host nuclear DNA repair machinery. The sequence is that of Protein P from Homo sapiens (Human).